A 304-amino-acid polypeptide reads, in one-letter code: Thymidylate synthase (304 aa).

DUMP-binding positions include Arg-30 and 157–158 (RR). Residue Cys-177 is the Nucleophile of the active site. DUMP contacts are provided by residues 206–209 (RSCD), Asn-217, and 247–249 (HVY). Residue Asp-209 participates in (6R)-5,10-methylene-5,6,7,8-tetrahydrofolate binding.

Belongs to the thymidylate synthase family. As to quaternary structure, homodimer.

It is found in the nucleus. The enzyme catalyses dUMP + (6R)-5,10-methylene-5,6,7,8-tetrahydrofolate = 7,8-dihydrofolate + dTMP. It functions in the pathway pyrimidine metabolism; dTTP biosynthesis. With respect to regulation, inhibited by 5-fluoro-2'-deoxyuridine 5'-monophosphate (FdUMP). Thymidylate synthase required for de novo biosynthesis of pyrimidine deoxyribonucleotides. Required for both nuclear and mitochondrial DNA synthesis. This chain is Thymidylate synthase (CDC21), found in Saccharomyces cerevisiae (strain ATCC 204508 / S288c) (Baker's yeast).